Here is a 554-residue protein sequence, read N- to C-terminus: Intraflagellar transport protein 56 (554 aa).

The tract at residues 1 to 27 is disordered; the sequence is MMLSRAKPAVGGESPHTDKRKKKGRKI. A compositionally biased stretch (basic residues) spans 18–27; that stretch reads DKRKKKGRKI. 4 TPR repeats span residues 57-90, 92-125, 151-184, and 468-501; these read EDTN…ENCN, EVWV…LQNR, KEDQ…NREY, and ANDC…EGKR.

Belongs to the IFT56 family. In terms of assembly, component of the IFT complex B. Interacts with IFT46; the interaction is direct.

The protein localises to the cell projection. The protein resides in the cilium. Its function is as follows. Component of the intraflagellar transport (IFT) complex B required for transport of proteins in the motile cilium. Required for transport of specific ciliary cargo proteins related to motility, while it is neither required for IFT complex B assembly or motion nor for cilium assembly. Required for efficient coupling between the accumulation of GLI2 and GLI3 at the ciliary tips and their dissociation from the negative regulator SUFU. Plays a key role in maintaining the integrity of the IFT complex B and the proper ciliary localization of the IFT complex B components. Not required for IFT complex A ciliary localization or function. Essential for maintaining proper microtubule organization within the ciliary axoneme. This is Intraflagellar transport protein 56 from Rattus norvegicus (Rat).